The chain runs to 1038 residues: Kinesin-like protein KIF17 (1038 aa).

Positions 5-335 (SVKVVVRCRP…LRYANRAKNI (331 aa)) constitute a Kinesin motor domain. 91 to 98 (GQTGSGKS) contacts ATP. Positions 346 to 470 (KDALLREYQE…ETEAILKAEV (125 aa)) form a coiled coil. Disordered regions lie at residues 379 to 401 (TQTPPGPVQSEEKLLSPTTVQQD), 503 to 559 (LSMP…GPEE), and 636 to 657 (DSSQTVVPQIPKQPSSADLLEP). Polar residues-rich tracts occupy residues 533–551 (SEFSFESNECSTLEDSATS) and 636–651 (DSSQTVVPQIPKQPSS). A coiled-coil region spans residues 748 to 855 (QQVLARLQLL…QLEKIDYLAT (108 aa)). Disordered regions lie at residues 916–940 (VVPTGTQNKPARKTSAVDSGEPHMQ) and 976–1038 (MKSL…GEPL). Over residues 983-1000 (NSPPGLNSSLSNNSALPP) the composition is skewed to low complexity.

It belongs to the TRAFAC class myosin-kinesin ATPase superfamily. Kinesin family. As to quaternary structure, homodimer. Interacts with APBA1 (via PDZ domain); the interaction is direct and is required for association of KIF17 with the cargo that is to be transported. Interacts with IFT B complex components IFT52 and IFT57. Interacts with IFT70B. Interacts with PIWIL1. Interacts with TBATA. As to expression, highly expressed in the gray matter of the brain, especially in the hippocampus.

The protein resides in the cytoplasm. It localises to the cytoskeleton. Its subcellular location is the cell projection. It is found in the cilium. The protein localises to the dendrite. In terms of biological role, dendrite-specific motor protein which, in association with the Apba1-containing complex (LIN-10-LIN-2-LIN-7 complex), transports vesicles containing N-methyl-D-aspartate (NMDA) receptor subunit NR2B along microtubules. The sequence is that of Kinesin-like protein KIF17 (Kif17) from Mus musculus (Mouse).